The sequence spans 406 residues: Magnesium transporter NIPA4 (406 aa).

The Extracellular portion of the chain corresponds to 1–57 (MELRVANANGSCENGSIVSLYCSSQEVLCQIVRGISPEEPYNATLITWQERVRKKYG). N-linked (GlcNAc...) asparagine glycans are attached at residues Asn9, Asn14, and Asn42. The helical transmembrane segment at 58-78 (FYIGVGLAFLSCFLIGTSVIL) threads the bilayer. Topologically, residues 79–126 (KKKGLIRLVATGATRAVNGGYGYLKDPMWWAGMATMSAGEVANFGAYA) are cytoplasmic. A helical transmembrane segment spans residues 127 to 147 (FAPATVVTPLGALSVLISAIF). Residues 148–155 (SSYCLGES) lie on the Extracellular side of the membrane. The helical transmembrane segment at 156 to 176 (LNLLGKLGCVICMAGSTVMVI) threads the bilayer. The Cytoplasmic segment spans residues 177 to 197 (HAPKEEKVTTVAEMASKMKDT). The chain crosses the membrane as a helical span at residues 198-218 (GFIVFAVLLVVSCLILIFIVA). Over 219 to 225 (PRYGQRN) the chain is Extracellular. Residues 226-246 (ILIYIIICSVIGSFSVTAVKG) form a helical membrane-spanning segment. Residues 247-263 (LGVTIRNFFQGLPVVRH) lie on the Cytoplasmic side of the membrane. A helical membrane pass occupies residues 264 to 284 (PLPYILSLILGLSIIIQVNFL). The Extracellular segment spans residues 285–295 (NRALDIFNTSL). N-linked (GlcNAc...) asparagine glycosylation is present at Asn292. Residues 296-316 (VFPIYYVFFTTVVVASSIVLF) traverse the membrane as a helical segment. At 317-326 (KEWYTMSAVD) the chain is on the cytoplasmic side. Residues 327–347 (IVGTLSGFVTIILGVFMLHAF) form a helical membrane-spanning segment. The Extracellular segment spans residues 348 to 406 (KDLDINQISLPHTHKNPTPAPAPEPTVIKLEDKNVLVDNIELASTPSPQQKPKVFMTDS).

This sequence belongs to the NIPA family.

The protein localises to the cell membrane. The catalysed reaction is Mg(2+)(in) = Mg(2+)(out). Acts as a Mg(2+) transporter. Can also transport other divalent cations such as Ba(2+), Sr(2+) and Fe(2+) but to a much less extent than Mg(2+). May be a receptor for ligands (trioxilins A3 and B3) from the hepoxilin pathway. The sequence is that of Magnesium transporter NIPA4 (Nipal4) from Mus musculus (Mouse).